The sequence spans 596 residues: Elongation factor 4 (596 aa).

In terms of domain architecture, tr-type G spans 2-184 (KHIRNFSIIA…VIVEQIPPPE (183 aa)). GTP is bound by residues 14 to 19 (DHGKST) and 131 to 134 (NKID).

Belongs to the TRAFAC class translation factor GTPase superfamily. Classic translation factor GTPase family. LepA subfamily.

It is found in the cell inner membrane. It carries out the reaction GTP + H2O = GDP + phosphate + H(+). In terms of biological role, required for accurate and efficient protein synthesis under certain stress conditions. May act as a fidelity factor of the translation reaction, by catalyzing a one-codon backward translocation of tRNAs on improperly translocated ribosomes. Back-translocation proceeds from a post-translocation (POST) complex to a pre-translocation (PRE) complex, thus giving elongation factor G a second chance to translocate the tRNAs correctly. Binds to ribosomes in a GTP-dependent manner. This chain is Elongation factor 4, found in Shewanella oneidensis (strain ATCC 700550 / JCM 31522 / CIP 106686 / LMG 19005 / NCIMB 14063 / MR-1).